The sequence spans 182 residues: MSEAPKKRWYVVQAFSGFEGRVAQSLREHIKMHGMEELFGEVLVPTEEVVEMRAGQRRKSERKFFPGYVLVQMIMNDESWHLVRSVPRVMGFIGGTSDRPAPITDKEADAILNRLEKASEAPRPRTMYEAGEVVRVNEGPFADFNGTVEEVDYEKSRLKVSVSIFGRATPVELEFGQVEKLD.

Positions glycine 131–serine 161 constitute a KOW domain.

It belongs to the NusG family.

In terms of biological role, participates in transcription elongation, termination and antitermination. This chain is Transcription termination/antitermination protein NusG, found in Vibrio parahaemolyticus serotype O3:K6 (strain RIMD 2210633).